Consider the following 401-residue polypeptide: Probable N-acetyl-gamma-glutamyl-phosphate reductase, chloroplastic (401 aa).

The N-terminal 48 residues, 1 to 48, are a transit peptide targeting the chloroplast; that stretch reads MSTASAFSSIQGCWFKGERKIRVADKRAKRLTLGSHVASPSSMSFRVS. The active site involves cysteine 205.

The protein belongs to the NAGSA dehydrogenase family. Type 1 subfamily. In terms of assembly, homotetramer.

It is found in the plastid. The protein localises to the chloroplast. It carries out the reaction N-acetyl-L-glutamate 5-semialdehyde + phosphate + NADP(+) = N-acetyl-L-glutamyl 5-phosphate + NADPH + H(+). The protein operates within amino-acid biosynthesis; L-arginine biosynthesis; N(2)-acetyl-L-ornithine from L-glutamate: step 3/4. This is Probable N-acetyl-gamma-glutamyl-phosphate reductase, chloroplastic from Arabidopsis thaliana (Mouse-ear cress).